Consider the following 55-residue polypeptide: Metallothionein-1 (55 aa).

The protein belongs to the metallothionein superfamily. Type 11 family.

The protein is Metallothionein-1 (MTP1) of Yarrowia lipolytica (strain CLIB 122 / E 150) (Yeast).